The sequence spans 463 residues: Arginine biosynthesis bifunctional protein ArgJ, chloroplastic (463 aa).

Substrate-binding residues include threonine 207, lysine 233, threonine 244, glutamate 331, asparagine 458, and threonine 463. Threonine 244 functions as the Nucleophile in the catalytic mechanism.

This sequence belongs to the ArgJ family. As to quaternary structure, heterodimer of an alpha and a beta chain.

Its subcellular location is the plastid. It localises to the chloroplast. It carries out the reaction N(2)-acetyl-L-ornithine + L-glutamate = N-acetyl-L-glutamate + L-ornithine. The enzyme catalyses L-glutamate + acetyl-CoA = N-acetyl-L-glutamate + CoA + H(+). The protein operates within amino-acid biosynthesis; L-arginine biosynthesis; L-ornithine and N-acetyl-L-glutamate from L-glutamate and N(2)-acetyl-L-ornithine (cyclic): step 1/1. It functions in the pathway amino-acid biosynthesis; L-arginine biosynthesis; N(2)-acetyl-L-ornithine from L-glutamate: step 1/4. Functionally, catalyzes two activities which are involved in the cyclic version of arginine biosynthesis: the synthesis of acetylglutamate from glutamate and acetyl-CoA, and of ornithine by transacetylation between acetylornithine and glutamate. This Oryza sativa subsp. japonica (Rice) protein is Arginine biosynthesis bifunctional protein ArgJ, chloroplastic.